The chain runs to 283 residues: MAAARRGSAGSEARLSLATFLLGASVLALPLLTRAGLQGRTGLALYVAGLNALLLLLYRPPRYQIAIRACFLGFVFGCGVLLSFSQSSWNHFGWYVCSLSLFHYSEYLVTAVNNPKSLSLDSFLLNHSLEYTVAALSSWIEFTLENIFWPELKQITWLSATGLLMVVFGECLRKAAMFTAGSNFNHVVQSEKSDTHTLVTSGVYAWCRHPSYVGWFYWSIGTQVMLCNPICGVVYALTVWRFFRDRTEEEEISLIHFFGEEYLDYKKRVPTGLPFIKGVKVEL.

Residues 1 to 15 (MAAARRGSAGSEARL) are Cytoplasmic-facing. The helical transmembrane segment at 16–32 (SLATFLLGASVLALPLL) threads the bilayer. The Lumenal portion of the chain corresponds to 33-40 (TRAGLQGR). Residues 41–58 (TGLALYVAGLNALLLLLY) traverse the membrane as a helical segment. Residues 59-68 (RPPRYQIAIR) lie on the Cytoplasmic side of the membrane. Residues 69–86 (ACFLGFVFGCGVLLSFSQ) form a helical membrane-spanning segment. The Lumenal segment spans residues 87-91 (SSWNH). A helical transmembrane segment spans residues 92 to 111 (FGWYVCSLSLFHYSEYLVTA). Over 112-130 (VNNPKSLSLDSFLLNHSLE) the chain is Cytoplasmic. Residues 131 to 148 (YTVAALSSWIEFTLENIF) form a helical membrane-spanning segment. Over 149–153 (WPELK) the chain is Lumenal. The helical transmembrane segment at 154–173 (QITWLSATGLLMVVFGECLR) threads the bilayer. Residues 174–211 (KAAMFTAGSNFNHVVQSEKSDTHTLVTSGVYAWCRHPS) lie on the Cytoplasmic side of the membrane. S-adenosyl-L-methionine-binding positions include Gln189, 196-199 (HTLV), Tyr204, and 209-212 (HPSY). The chain crosses the membrane as a helical span at residues 212–227 (YVGWFYWSIGTQVMLC). A topological domain (lumenal) is located at residue Asn228. A helical membrane pass occupies residues 229-243 (PICGVVYALTVWRFF). The Cytoplasmic segment spans residues 244 to 283 (RDRTEEEEISLIHFFGEEYLDYKKRVPTGLPFIKGVKVEL). Residue Arg246 coordinates substrate. Glu250 provides a ligand contact to S-adenosyl-L-methionine.

The protein belongs to the class VI-like SAM-binding methyltransferase superfamily. Isoprenylcysteine carboxyl methyltransferase family. In terms of tissue distribution, highly enriched in adult cerebellum, with a low level expression in other brain regions.

The protein resides in the endoplasmic reticulum membrane. The enzyme catalyses [protein]-C-terminal S-[(2E,6E)-farnesyl]-L-cysteine + S-adenosyl-L-methionine = [protein]-C-terminal S-[(2E,6E)-farnesyl]-L-cysteine methyl ester + S-adenosyl-L-homocysteine. Functionally, catalyzes the post-translational methylation of isoprenylated C-terminal cysteine residues. The sequence is that of Protein-S-isoprenylcysteine O-methyltransferase (Icmt) from Mus musculus (Mouse).